The chain runs to 392 residues: ESX-1 secretion-associated protein EspA (392 aa).

A disordered region spans residues Thr-302 to Val-392. Gly residues predominate over residues Gln-334–Gly-344.

In terms of assembly, homodimer; disulfide-linked. An artificial EsxB-EsxA heterodimer interacts with EspA.

It is found in the secreted. In terms of biological role, required for secretion of EsxA (ESAT-6) and EsxB (CFP-10) and for virulence. Involved in translocation of bacteria from the host (human) phagolysosome to the host cytoplasm. This Mycobacterium tuberculosis (strain ATCC 25618 / H37Rv) protein is ESX-1 secretion-associated protein EspA.